The chain runs to 292 residues: MPKIAQIFNNNVALVDLDNRGQAVVRGRGIAFQKRRGDVIPTKQIEKIFYLANETSRQNLYFLLKNIPIDVVTTTYEIIDVAQKQYRLKVLDYIYITLSDHIYEAYKRYQAGTYQETMVPDFHIQYPAEYAVAKQALQIIATNLGVQFPQSEIKNLALHFINASGEDDGEQVFGKSNEASLSQLVQEVLKRHHITRSHSNGNYYDRFMIHLQYLIDRLQRVDTYAVTIVPEVATELKQNYPQSYKIASEIFDEIKDQLYRSMSEDERLYFIIHIQRLINEAPAQNHSQNDSL.

PRD domains lie at 66–170 (NIPI…DDGE) and 172–284 (VFGK…APAQ).

Belongs to the transcriptional antiterminator BglG family.

Mediates positive regulation of the lac operon by functioning as an antiterminator factor of transcription. The protein is Transcription antiterminator LacT (lacT) of Lacticaseibacillus casei (Lactobacillus casei).